We begin with the raw amino-acid sequence, 127 residues long: Small ribosomal subunit protein uS11 (127 aa).

Belongs to the universal ribosomal protein uS11 family. In terms of assembly, part of the 30S ribosomal subunit. Interacts with proteins S7 and S18. Binds to IF-3.

Located on the platform of the 30S subunit, it bridges several disparate RNA helices of the 16S rRNA. Forms part of the Shine-Dalgarno cleft in the 70S ribosome. The chain is Small ribosomal subunit protein uS11 from Chlorobium limicola (strain DSM 245 / NBRC 103803 / 6330).